Here is a 767-residue protein sequence, read N- to C-terminus: Photosystem I P700 chlorophyll a apoprotein A1 (767 aa).

The next 8 helical transmembrane spans lie at 72–95 (IFSA…FHGA), 158–181 (LMAL…FHYH), 197–221 (LNHH…HVSA), 305–323 (IAHH…GHMY), 364–387 (WHAQ…QHMY), 403–429 (IGLF…IAMV), 451–473 (AIIS…LYIH), and 548–566 (FMVH…LILL). [4Fe-4S] cluster is bound by residues Cys590 and Cys599. The next 2 membrane-spanning stretches (helical) occupy residues 606–627 (HVFL…HFSW) and 681–703 (TAAY…MFLF). His692 lines the chlorophyll a' pocket. Residues Met700 and Tyr708 each contribute to the chlorophyll a site. Trp709 is a phylloquinone binding site. A helical membrane pass occupies residues 741–761 (AVGVAHYLLGGIATTWAFFHA).

Belongs to the PsaA/PsaB family. The PsaA/B heterodimer binds the P700 chlorophyll special pair and subsequent electron acceptors. PSI consists of a core antenna complex that captures photons, and an electron transfer chain that converts photonic excitation into a charge separation. The cyanobacterial PSI reaction center is composed of one copy each of PsaA,B,C,D,E,F,I,J,K,L,M and X, and forms trimeric complexes. The cofactor is PSI electron transfer chain: 5 chlorophyll a, 1 chlorophyll a', 2 phylloquinones and 3 4Fe-4S clusters. PSI core antenna: 90 chlorophyll a, 22 carotenoids, 3 phospholipids and 1 galactolipid. P700 is a chlorophyll a/chlorophyll a' dimer, A0 is one or more chlorophyll a, A1 is one or both phylloquinones and FX is a shared 4Fe-4S iron-sulfur center..

Its subcellular location is the cellular thylakoid membrane. It carries out the reaction reduced [plastocyanin] + hnu + oxidized [2Fe-2S]-[ferredoxin] = oxidized [plastocyanin] + reduced [2Fe-2S]-[ferredoxin]. In terms of biological role, psaA and PsaB bind P700, the primary electron donor of photosystem I (PSI), as well as the electron acceptors A0, A1 and FX. PSI is a plastocyanin/cytochrome c6-ferredoxin oxidoreductase, converting photonic excitation into a charge separation, which transfers an electron from the donor P700 chlorophyll pair to the spectroscopically characterized acceptors A0, A1, FX, FA and FB in turn. Oxidized P700 is reduced on the lumenal side of the thylakoid membrane by plastocyanin or cytochrome c6. This is Photosystem I P700 chlorophyll a apoprotein A1 from Synechococcus sp. (strain CC9605).